The chain runs to 4574 residues: E3 ubiquitin-protein ligase MYCBP2 (4574 aa).

Disordered regions lie at residues 92-115 (RGKK…VKTR) and 599-620 (SASK…PYKP). RCC1 repeat units lie at residues 591–646 (DGSV…IVTK), 690–746 (SGEV…MMCQ), 943–993 (NGDV…VLLM), and 995–1051 (GQVF…LRID). Over residues 611 to 620 (SRRQPKPYKP) the composition is skewed to basic residues. Cys1733 and Cys1850 form a disulfide bridge. 2 disordered regions span residues 1976–1998 (APPT…EQGL) and 2313–2332 (LQRL…LTFG). 2 stretches are compositionally biased toward polar residues: residues 1981–1998 (NPNQ…EQGL) and 2317–2328 (PGTSSNSATGTD). The Filamin repeat unit spans residues 2336-2417 (APKLEATYEP…IHVTIDGIEI (82 aa)). 5 disordered regions span residues 2613-2824 (GFDY…PSPH), 2845-2922 (SNDE…KQAM), 3085-3116 (SPGS…KAEV), 3345-3365 (PGSN…TDSD), and 3505-3526 (FETE…EQEK). Composition is skewed to basic and acidic residues over residues 2639–2663 (HRQE…KSKN) and 2678–2688 (DTGKLRSDSHS). Residues 2716–2729 (NPGSRSSSPKQKTF) show a composition bias toward polar residues. Low complexity predominate over residues 2730–2745 (TSGRSSPSSTSSPRSS). Composition is skewed to basic and acidic residues over residues 2761 to 2772 (VHLDPPRERSKS), 2854 to 2864 (SELHNAEEGSS), and 2874 to 2883 (PVKEELESRS). 2 stretches are compositionally biased toward basic residues: residues 2887 to 2900 (VSRK…RPKK) and 3102 to 3111 (KKTKKEKKKK). Basic and acidic residues predominate over residues 3515 to 3526 (NKGNKENLEQEK). A DOC domain is found at 3617–3795 (FNISVQSGYE…SVAQQKNCEA (179 aa)). The segment at 3815–3841 (GDAEPTPEQEEKNLLSSPEGEDKAPSD) is disordered. Zn(2+) contacts are provided by Cys4324, Cys4327, Cys4342, His4344, His4347, Cys4350, Cys4371, Cys4374, Cys4440, and Cys4443. The segment at 4324-4375 (CMICFTEALSAAPAIQLDCSHVFHLQCTRRVLENRWLGPRITFGFMSCPICK) adopts an RING-type; atypical zinc-finger fold. The tract at residues 4435–4572 (YAYYVCFKCK…LGCGVCRNAH (138 aa)) is tandem cysteine domain. The active site involves Cys4454. Zn(2+) is bound by residues Cys4471, Cys4474, Cys4483, His4486, Cys4495, Cys4498, and Cys4499. Cys4506 is a catalytic residue. The Zn(2+) site is built by Cys4513, Cys4516, Cys4534, Cys4548, His4554, Cys4565, and Cys4568.

The protein belongs to the RING-Cys relay (RCR) family. In terms of tissue distribution, widely expressed when the visual system begins developing. In the eye, expressed in all cells, including retinal ganglion cells, with no obvious gradient.

The protein localises to the nucleus. It is found in the cell projection. The protein resides in the axon. It localises to the cytoplasm. Its subcellular location is the cytoskeleton. It catalyses the reaction [E2 ubiquitin-conjugating enzyme]-S-ubiquitinyl-L-cysteine + [acceptor protein]-L-threonine = [E2 ubiquitin-conjugating enzyme]-L-cysteine + [acceptor protein]-3-O-ubiquitinyl-L-threonine.. The protein operates within protein modification; protein ubiquitination. Functionally, atypical E3 ubiquitin-protein ligase which specifically mediates ubiquitination of threonine and serine residues on target proteins, instead of ubiquitinating lysine residues. Shows esterification activity towards both threonine and serine, with a preference for threonine, and acts via two essential catalytic cysteine residues that relay ubiquitin to its substrate via thioester intermediates. Interacts with the E2 enzymes UBE2D1, UBE2D3, UBE2E1 and UBE2L3. Plays a key role in neural development, probably by mediating ubiquitination of threonine residues on target proteins. Involved in different processes such as regulation of neurite outgrowth, synaptic growth, synaptogenesis and axon degeneration. Required in the visual system for correct fasciculation, targeting and mapping of retinal axons. Acts as a regulator of pteridine synthesis. May play a role in the regulation of the circadian clock gene expression. The sequence is that of E3 ubiquitin-protein ligase MYCBP2 from Danio rerio (Zebrafish).